We begin with the raw amino-acid sequence, 187 residues long: Ribosome maturation factor RimM (187 aa).

The 77-residue stretch at 111 to 187 (KDEYYWVDLI…RILVDWQADF (77 aa)) folds into the PRC barrel domain.

The protein belongs to the RimM family. Binds ribosomal protein uS19.

It localises to the cytoplasm. Functionally, an accessory protein needed during the final step in the assembly of 30S ribosomal subunit, possibly for assembly of the head region. Essential for efficient processing of 16S rRNA. May be needed both before and after RbfA during the maturation of 16S rRNA. It has affinity for free ribosomal 30S subunits but not for 70S ribosomes. The polypeptide is Ribosome maturation factor RimM (Albidiferax ferrireducens (strain ATCC BAA-621 / DSM 15236 / T118) (Rhodoferax ferrireducens)).